A 263-amino-acid chain; its full sequence is uncharacterized protein (263 aa).

Residues 53–89 (SAVTASKFSPDGRWLVNLTDQGYVQLWDVHKGERVKT) form a WD repeat.

This is an uncharacterized protein from Deinococcus radiodurans (strain ATCC 13939 / DSM 20539 / JCM 16871 / CCUG 27074 / LMG 4051 / NBRC 15346 / NCIMB 9279 / VKM B-1422 / R1).